Here is a 165-residue protein sequence, read N- to C-terminus: Adenosine 5'-monophosphoramidase HINT3 (165 aa).

A disordered region spans residues 1-23 (MAEKQAGLVGEPDPEGSSPGTSE). Ala-2 bears the N-acetylalanine mark. Positions 32–143 (VFCRVAAGQE…PVKEFGFLSK (112 aa)) constitute an HIT domain. Residues 59–60 (DI) and 128–130 (HLH) each bind AMP. A Histidine triad motif motif is present at residues 126–130 (HLHLH). Residue His-128 is the Tele-AMP-histidine intermediate of the active site.

It belongs to the HINT family. Forms dimers to octamers and even larger oligomer. Interacts with CALM1.

The protein resides in the cytoplasm. It localises to the nucleus. The enzyme catalyses adenosine 5'-phosphoramidate + H2O = AMP + NH4(+). Functionally, exhibits adenosine 5'-monophosphoramidase activity, hydrolyzing purine nucleotide phosphoramidates with a single phosphate group such as adenosine 5'monophosphoramidate (AMP-NH2) to yield AMP and NH2. Hydrolyzes lysyl-AMP (AMP-N-epsilon-(N-alpha-acetyl lysine methyl ester)) generated by lysine tRNA ligase. In Mus musculus (Mouse), this protein is Adenosine 5'-monophosphoramidase HINT3 (Hint3).